An 87-amino-acid polypeptide reads, in one-letter code: Cobalt transport protein CbiN (87 aa).

Transmembrane regions (helical) follow at residues 4–24 (LLLLLILLIFAAKVTAEEWAG) and 58–78 (MLFSLQAAIGSLIIGYFLGYY).

This sequence belongs to the CbiN family. As to quaternary structure, forms an energy-coupling factor (ECF) transporter complex composed of an ATP-binding protein (A component, CbiO), a transmembrane protein (T component, CbiQ) and 2 possible substrate-capture proteins (S components, CbiM and CbiN) of unknown stoichimetry.

It is found in the cell membrane. It functions in the pathway cofactor biosynthesis; adenosylcobalamin biosynthesis. Its function is as follows. Part of the energy-coupling factor (ECF) transporter complex CbiMNOQ involved in cobalt import. This Archaeoglobus fulgidus (strain ATCC 49558 / DSM 4304 / JCM 9628 / NBRC 100126 / VC-16) protein is Cobalt transport protein CbiN.